The following is a 45-amino-acid chain: Caltrin-like protein 1 (45 aa).

The Kazal-like domain occupies 8-45 (DSDRPNCSRYVQHLYMCTKELDPVCGTDGHTYGNRSIF). N13 and N41 each carry an N-linked (GlcNAc...) asparagine glycan.

In terms of processing, glycosylated.

It is found in the secreted. Its function is as follows. Inhibits calcium transport into spermatozoa. This is Caltrin-like protein 1 from Cavia porcellus (Guinea pig).